A 1378-amino-acid polypeptide reads, in one-letter code: MIKVTIFLLLSIFSFNLYGLELNEKVSIKYGAEQGVGSADSNTKLCSDILKYLYMDEYLSEGDKATFEKKCHNVIGNIRNTFSNKNTIKEGNEFLMSILHMKSLYGNNNNNNAGSESDVTLKSLYLSLKGSQNTEGESEVPSDDEINKTIMNFVKFNKYLLDNSNDIKKVHDFLVLTSQSNENLLPNKEKLFEQIVDQIKYFDEYFFASGGKIKVKKGYLKYNFLDIYKQPVCSAYLHLCSRYYESVSIYIRLKKVFNGIPAFLDKNCRKVKGEEFKKLMDMELKHNHIVERFDKYIISDDLYYVNMKVFDLKNVDKIQVSKIDDINNLNIYEHKETMHLSAKNLSRYIDIKKELNDEKAYKQLMSAIRKYVTTLTKADSDITYFVKQLDDEEIERFLIDLNFFLYNGFLRITEDKHLINADDVSPSYINLYRSNNIVALYILKTQYEENKLSEYRAHKFYRRKRVSNITNDMIKKDFTQTNALTNLPNLDNKKTTEYYLKEYENFVENFQPDLHDIMKLQLFFTMAFKDCNVNQNFTETSKKLWFDLLYAYDKFGWFYIHPNEVINSINKTDFVRHVLVSRNFLLKNNDQLTFLETQVAKIVEIINLSLEVDKSPDSLDFSIPMNFFNHKNGYHVMNDDKLKLLTSYEYIDSIANNYFFLSEYKNDVFRTGNNFKLYFNLPNIYSLAYQLFNELAININVITNVPLKKYLKYNASYAYFTLMNMIGKNHDIYSKGSRFVYASYILGLVFFIESHIDIARLKPKDFFFMKQSLPIIDHVYHKDLKTLKKNCTLLTDFMKINKNSQNYSLTHTEEMIKILGLLTVTLWAKEGKKSVYYDDDVSLYRKLMVSCVFNGGETIQEKLANNIEKSCDISQYGIKSKNLKDMIDINLSIHKWNPAEIEKLAYSFVLSCKMQKLMYKPMNVEKLPLEDYYKLSLAPDMVKTYHCYKLGKQAAELLESIILKKKFVRFRVTDAIDVYDFFYIKKVLSSRIKKEYNEFLQDKRAFEKKELETILNNSPFSEEQTMKLINSYECHWFTSYENFRILWMHASSNLGTGTYLKNFFSELWQNIRFLFKSKLKIRDMEYFSGDISQMNLLDYYSPMVHSESHCQEKMQVLFITLRDSKEENRSEIAQKVKSAYYQCKLDYYKNHHSDFIHRIHPNDFLNNKVYVLKQPYYLMSNVPLNNPKKVSRLFVTEGTLEYLLLDKINIPECFGPCTKLHFNKVVIKESKQRIYDMTINNALVPEIQPYNRRKYMTIYINEAYIKNIVSDALTSEEIKRHDIQKGNIKICMGKSTYLTEPILTEEHFNLTHKPVYDFSSVKHNLKVFHMKNEHLVSEDPNDDCFINYPLATINLDISDPYKEISEDLIKNLYILKSS.

A signal peptide spans 1-19 (MIKVTIFLLLSIFSFNLYG). 2 disulfides stabilise this stretch: Cys-46–Cys-71 and Cys-233–Cys-240. Residues 739-759 (FVYASYILGLVFFIESHIDIA) form a helical membrane-spanning segment. Intrachain disulfides connect Cys-791-Cys-851, Cys-871-Cys-912, and Cys-947-Cys-1034.

Component of the RhopH complex. RhopH complex is composed of CLAG3.1/CLAG3.2, RhopH2 and RhopH3 with a 1:1:1 subunit stoichiometry. Interacts with CLAG3.1/CLAG3.2.

Its subcellular location is the host cell membrane. The protein resides in the parasitophorous vacuole membrane. It is found in the host cytoplasm. The protein localises to the cytoplasm. It localises to the cytoplasmic vesicle. Its subcellular location is the secretory vesicle. The protein resides in the rhoptry. Participates in the formation of new permeability pathways in Plasmodium-infected erythrocytes enabling the uptake of nutrients from the blood plasma. Required for maintaining invasion capacity of merozoites. Required for parasite growth and proliferation. This chain is High molecular weight rhoptry protein 2, found in Plasmodium falciparum (isolate 3D7).